Consider the following 110-residue polypeptide: Phosphoribosyl-ATP pyrophosphatase (110 aa).

It belongs to the PRA-PH family.

Its subcellular location is the cytoplasm. It carries out the reaction 1-(5-phospho-beta-D-ribosyl)-ATP + H2O = 1-(5-phospho-beta-D-ribosyl)-5'-AMP + diphosphate + H(+). It functions in the pathway amino-acid biosynthesis; L-histidine biosynthesis; L-histidine from 5-phospho-alpha-D-ribose 1-diphosphate: step 2/9. In Lacticaseibacillus casei (strain BL23) (Lactobacillus casei), this protein is Phosphoribosyl-ATP pyrophosphatase.